The primary structure comprises 199 residues: Transmembrane protein 223 (199 aa).

At 1–43 the chain is on the mitochondrial matrix side; sequence MVASVPLRNVSHLLSVLRSQNVPRYLQNGVPRDVLLFRHERGR. A helical membrane pass occupies residues 44-64; the sequence is FFAILGLFCAGQGIFWTSLAV. The Mitochondrial intermembrane segment spans residues 65–94; it reads AALSRPLSRVPAEAPNRSYQDLRSALWRYG. The chain crosses the membrane as a helical span at residues 95-115; sequence LAVGCGTMGVLVLGAGLLYSL. The Mitochondrial matrix portion of the chain corresponds to 116–199; that stretch reads RSVRSVMLLA…DNTVGAYRSL (84 aa).

It belongs to the TMEM223 family. Associates with the mitochondrial ribosome.

The protein resides in the mitochondrion inner membrane. Its function is as follows. Mitochondrial ribosome-associated protein involved in the first steps of cytochrome c oxidase complex (complex IV) biogenesis. Stimulates the translation of MT-CO1 mRNA and is a constituent of early MT-CO1 assembly intermediates. The sequence is that of Transmembrane protein 223 from Mus musculus (Mouse).